Here is a 250-residue protein sequence, read N- to C-terminus: ATP synthase subunit b 2 (250 aa).

The helical transmembrane segment at 2 to 22 threads the bilayer; that stretch reads LIDWFTVFAQILNFVILLGLL.

Belongs to the ATPase B chain family. F-type ATPases have 2 components, F(1) - the catalytic core - and F(0) - the membrane proton channel. F(1) has five subunits: alpha(3), beta(3), gamma(1), delta(1), epsilon(1). F(0) has four main subunits: a(1), b(1), b'(1) and c(10-14). The alpha and beta chains form an alternating ring which encloses part of the gamma chain. F(1) is attached to F(0) by a central stalk formed by the gamma and epsilon chains, while a peripheral stalk is formed by the delta, b and b' chains.

The protein resides in the cellular thylakoid membrane. F(1)F(0) ATP synthase produces ATP from ADP in the presence of a proton or sodium gradient. F-type ATPases consist of two structural domains, F(1) containing the extramembraneous catalytic core and F(0) containing the membrane proton channel, linked together by a central stalk and a peripheral stalk. During catalysis, ATP synthesis in the catalytic domain of F(1) is coupled via a rotary mechanism of the central stalk subunits to proton translocation. Its function is as follows. Component of the F(0) channel, it forms part of the peripheral stalk, linking F(1) to F(0). In Picosynechococcus sp. (strain ATCC 27264 / PCC 7002 / PR-6) (Agmenellum quadruplicatum), this protein is ATP synthase subunit b 2.